The primary structure comprises 393 residues: 8-amino-7-oxononanoate synthase (393 aa).

108-109 (GF) contacts pyridoxal 5'-phosphate. Substrate is bound at residue histidine 133. Pyridoxal 5'-phosphate contacts are provided by residues serine 182, 207–210 (DDAH), and 238–241 (TLSK). Residue lysine 241 is modified to N6-(pyridoxal phosphate)lysine. Residue threonine 355 coordinates substrate.

The protein belongs to the class-II pyridoxal-phosphate-dependent aminotransferase family. BioF subfamily. Homodimer. The cofactor is pyridoxal 5'-phosphate.

It catalyses the reaction 6-carboxyhexanoyl-[ACP] + L-alanine + H(+) = (8S)-8-amino-7-oxononanoate + holo-[ACP] + CO2. Its pathway is cofactor biosynthesis; biotin biosynthesis. Functionally, catalyzes the decarboxylative condensation of pimeloyl-[acyl-carrier protein] and L-alanine to produce 8-amino-7-oxononanoate (AON), [acyl-carrier protein], and carbon dioxide. This is 8-amino-7-oxononanoate synthase from Petrotoga mobilis (strain DSM 10674 / SJ95).